Consider the following 861-residue polypeptide: E3 ubiquitin-protein ligase SH3RF1 (861 aa).

The segment at 12–53 (CPVCLERLDASAKVLPCQHTFCKRCLLGIVSSRNELRCPECR) adopts an RING-type zinc-finger fold. 2 SH3 domains span residues 132 to 191 (PQLP…IIKP) and 194 to 257 (QPPP…FNSA). The disordered stretch occupies residues 268 to 319 (SGVDTGEGSSGTTHSSNSQKQADAKKNTKKRHSFTSLTMSNKSSQSVQNRHS). Over residues 273–285 (GEGSSGTTHSSNS) the composition is skewed to low complexity. Residues 301-317 (FTSLTMSNKSSQSVQNR) show a composition bias toward polar residues. The 62-residue stretch at 435-496 (TRPSVFVAIY…PGNYVAPVTR (62 aa)) folds into the SH3 3 domain. The interval 684–731 (NSAANKQDKDSKKEKKGLLKLLSGASTKRKPRSSPPHSPTQELEQTNS) is disordered. A compositionally biased stretch (basic and acidic residues) spans 689–700 (KQDKDSKKEKKG). One can recognise an SH3 4 domain in the interval 802 to 861 (RPCERYRVVVSYPPQSEAELELKEGDIVFVHKKREDGWFKGTLQRNGKTGLFPGSFVENI).

The protein belongs to the SH3RF family. Post-translationally, autoubiquitinated. Ubiquitinated by SH3RF2, leading to proteasome-mediated degradation.

Its subcellular location is the cytoplasm. The protein resides in the perinuclear region. It localises to the cell projection. It is found in the lamellipodium. The protein localises to the golgi apparatus. Its subcellular location is the trans-Golgi network. The enzyme catalyses S-ubiquitinyl-[E2 ubiquitin-conjugating enzyme]-L-cysteine + [acceptor protein]-L-lysine = [E2 ubiquitin-conjugating enzyme]-L-cysteine + N(6)-ubiquitinyl-[acceptor protein]-L-lysine.. The protein operates within protein modification; protein ubiquitination. Has E3 ubiquitin-protein ligase activity. In the absence of an external substrate, it can catalyze self-ubiquitination. Acts as a scaffold protein that contributes to the effective activation of the JNK signaling pathway. The polypeptide is E3 ubiquitin-protein ligase SH3RF1 (sh3rf1) (Xenopus tropicalis (Western clawed frog)).